The chain runs to 348 residues: dTDP-glucose 4,6-dehydratase (348 aa).

Residues 15-16, 37-40, 62-63, and 82-86 each bind NAD(+); these read FI, DKLT, DI, and YAAES. Positions 86 and 88 each coordinate substrate. NAD(+) is bound at residue T101. T125 provides a ligand contact to substrate. D126 (proton donor) is an active-site residue. Catalysis depends on proton acceptor residues E127 and Y161. Position 161-165 (161-165) interacts with NAD(+); the sequence is YSSTK. N190 contributes to the substrate binding site. N191 contacts NAD(+). Substrate is bound by residues 200-205, 216-218, R225, N260, and 283-287; these read KFIPRQ, KLY, and DRAGH.

The protein belongs to the NAD(P)-dependent epimerase/dehydratase family. dTDP-glucose dehydratase subfamily. In terms of assembly, homodimer. Requires NAD(+) as cofactor.

It carries out the reaction dTDP-alpha-D-glucose = dTDP-4-dehydro-6-deoxy-alpha-D-glucose + H2O. It functions in the pathway carbohydrate biosynthesis; dTDP-L-rhamnose biosynthesis. Its function is as follows. Catalyzes the dehydration of dTDP-D-glucose to form dTDP-6-deoxy-D-xylo-4-hexulose via a three-step process involving oxidation, dehydration and reduction. The polypeptide is dTDP-glucose 4,6-dehydratase (rmlB) (Streptococcus mutans serotype c (strain ATCC 700610 / UA159)).